The chain runs to 471 residues: Putative multidrug resistance protein MdtD (471 aa).

At 1-11 (MTDLPDSTRWQ) the chain is on the periplasmic side. The helical transmembrane segment at 12-32 (LWIVAFGFFMQSLDTTIVNTA) threads the bilayer. At 33 to 48 (LPSMAQSLGESPLHMH) the chain is on the cytoplasmic side. A helical membrane pass occupies residues 49 to 69 (MVIVSYVLTVAVMLPASGWLA). At 70 to 76 (DKVGVRN) the chain is on the periplasmic side. A helical membrane pass occupies residues 77–97 (IFFTAIVLFTLGSLFCALSGT). The Cytoplasmic portion of the chain corresponds to 98–101 (LNEL). Residues 102-124 (LLARALQGVGGAMMVPVGRLTVM) form a helical membrane-spanning segment. Residues 125 to 137 (KIVPREQYMAAMT) lie on the Periplasmic side of the membrane. A helical transmembrane segment spans residues 138-158 (FVTLPGQVGPLLGPALGGLLV). The Cytoplasmic portion of the chain corresponds to 159 to 164 (EYASWH). The helical transmembrane segment at 165-185 (WIFLINIPVGIIGAIATLLLM) threads the bilayer. Residues 186-196 (PNYTMQTRRFD) lie on the Periplasmic side of the membrane. A helical membrane pass occupies residues 197-217 (LSGFLLLAVGMAVLTLALDGS). The Cytoplasmic portion of the chain corresponds to 218–224 (KGTGLSP). Residues 225-245 (LTIAGLVAVGVVALVLYLLHA) traverse the membrane as a helical segment. Topologically, residues 246–262 (RNNNRALFSLKLFRTRT) are periplasmic. A helical transmembrane segment spans residues 263–283 (FSLGLAGSFAGRIGSGMLPFM). The Cytoplasmic segment spans residues 284–285 (TP). Residues 286 to 306 (VFLQIGLGFSPFHAGLMMIPM) form a helical membrane-spanning segment. At 307–341 (VLGSMGMKRIVVQVVNRFGYRRVLVATTLGLSLVT) the chain is on the periplasmic side. A helical transmembrane segment spans residues 342–362 (LLFMTTALLGWYYVLPFVLFL). Over 363–395 (QGMVNSTRFSSMNTLTLKDLPDNLASSGNSLLS) the chain is Cytoplasmic. The helical transmembrane segment at 396-416 (MIMQLSMSIGVTIAGLLLGLF) threads the bilayer. At 417–430 (GSQHVSVDSGTTQT) the chain is on the periplasmic side. The helical transmembrane segment at 431–451 (VFMYTWLSMALIIALPAFIFA) threads the bilayer. Residues 452–471 (RVPNDTHQNVAISRRKRSAQ) are Cytoplasmic-facing.

Belongs to the major facilitator superfamily. TCR/Tet family.

It is found in the cell inner membrane. The sequence is that of Putative multidrug resistance protein MdtD from Escherichia coli (strain K12 / MC4100 / BW2952).